Here is a 163-residue protein sequence, read N- to C-terminus: MDALEGESFALSFSSASDAEFDAVVGYLEDIIMDDEFQLLQRNFMDKYYLEFEDTEENKLIYTPIFNEYISLVEKYIEEQLLQRIPEFNMAAFTTTLQHHKDEVAGDIFDMLLTFTDFLAFKEMFLDYRAEKEGRGLDLSSGLVVTSLCKSSSLPASQNNLRH.

This sequence belongs to the ARL2BP family. In terms of assembly, found in a complex with ARL2BP, ARL2 and SLC25A6. Found in a complex with ARL2, ARL2BP and SLC25A4. Interacts with STAT2, STAT3 and STAT4. Interacts with GTP-bound ARL2 and ARL3; the complex ARL2-ARL2BP as well as ARL2BP alone, binds to SLC25A4. Interaction with ARL2 may be required for targeting to cilia basal body. Interacts with STAT3; interaction is enhanced with ARL2. As to expression, expressed in retina pigment epithelial cells (at protein level). Widely expressed.

It localises to the cytoplasm. The protein localises to the mitochondrion intermembrane space. Its subcellular location is the cytoskeleton. It is found in the microtubule organizing center. The protein resides in the centrosome. It localises to the nucleus. The protein localises to the spindle. Its subcellular location is the cilium basal body. In terms of biological role, together with ARL2, plays a role in the nuclear translocation, retention and transcriptional activity of STAT3. May play a role as an effector of ARL2. In Homo sapiens (Human), this protein is ADP-ribosylation factor-like protein 2-binding protein (ARL2BP).